The sequence spans 318 residues: Glycerol 2-dehydrogenase (NADP(+)) (318 aa).

Y52 functions as the Proton donor in the catalytic mechanism. Residue H115 coordinates substrate. 217–277 (SPLGSQNQVP…SSTPSRIESN (61 aa)) provides a ligand contact to NADP(+).

It belongs to the aldo/keto reductase family.

The enzyme catalyses glycerol + NADP(+) = dihydroxyacetone + NADPH + H(+). Functionally, glycerol oxidoreductase probably involved in glycerol synthesis. The protein is Glycerol 2-dehydrogenase (NADP(+)) (gld2) of Hypocrea jecorina (Trichoderma reesei).